Consider the following 306-residue polypeptide: Ribonuclease Z (306 aa).

The Zn(2+) site is built by His63, His65, Asp67, His68, His140, Asp211, and His269. Asp67 (proton acceptor) is an active-site residue.

This sequence belongs to the RNase Z family. Homodimer. Zn(2+) is required as a cofactor.

The catalysed reaction is Endonucleolytic cleavage of RNA, removing extra 3' nucleotides from tRNA precursor, generating 3' termini of tRNAs. A 3'-hydroxy group is left at the tRNA terminus and a 5'-phosphoryl group is left at the trailer molecule.. Its function is as follows. Zinc phosphodiesterase, which displays some tRNA 3'-processing endonuclease activity. Probably involved in tRNA maturation, by removing a 3'-trailer from precursor tRNA. This Listeria monocytogenes serovar 1/2a (strain ATCC BAA-679 / EGD-e) protein is Ribonuclease Z.